The chain runs to 203 residues: Histone deacetylase HDT4 (203 aa).

The segment at 2-5 (EFWG) is required to repress transcription. Residues 121–203 (AALPQNEINP…PFPCGPSCKK (83 aa)) are disordered. The segment covering 129-157 (NPEEDDESDSDEMGLDEDDDSSDEEDVEA) has biased composition (acidic residues). A compositionally biased stretch (basic residues) spans 180–193 (GGKKNKSSGGKKRC).

The protein belongs to the histone deacetylase HD2 family. As to expression, confined to stems and flowers with young siliques.

Its subcellular location is the nucleus. It localises to the nucleolus. Probably mediates the deacetylation of lysine residues lysine residues on the N-terminal part of the core histones (H2A, H2B, H3 and H4). Histone deacetylation gives a tag for epigenetic repression and plays an important role in transcriptional regulation, cell cycle progression and developmental events. The sequence is that of Histone deacetylase HDT4 (HDT4) from Arabidopsis thaliana (Mouse-ear cress).